The chain runs to 109 residues: Nucleoid-associated protein HS_1309 (109 aa).

This sequence belongs to the YbaB/EbfC family. Homodimer.

It is found in the cytoplasm. It localises to the nucleoid. Binds to DNA and alters its conformation. May be involved in regulation of gene expression, nucleoid organization and DNA protection. The sequence is that of Nucleoid-associated protein HS_1309 from Histophilus somni (strain 129Pt) (Haemophilus somnus).